Consider the following 166-residue polypeptide: 2-C-methyl-D-erythritol 2,4-cyclodiphosphate synthase (166 aa).

A divalent metal cation-binding residues include Asp-17 and His-19. Residues 17–19 (DSH) and 43–44 (HS) each bind 4-CDP-2-C-methyl-D-erythritol 2-phosphate. Residue His-51 coordinates a divalent metal cation. 4-CDP-2-C-methyl-D-erythritol 2-phosphate-binding positions include 65-67 (DIG), 109-115 (AQKPKMA), and Arg-151.

It belongs to the IspF family. As to quaternary structure, homotrimer. A divalent metal cation is required as a cofactor.

The enzyme catalyses 4-CDP-2-C-methyl-D-erythritol 2-phosphate = 2-C-methyl-D-erythritol 2,4-cyclic diphosphate + CMP. It participates in isoprenoid biosynthesis; isopentenyl diphosphate biosynthesis via DXP pathway; isopentenyl diphosphate from 1-deoxy-D-xylulose 5-phosphate: step 4/6. In terms of biological role, involved in the biosynthesis of isopentenyl diphosphate (IPP) and dimethylallyl diphosphate (DMAPP), two major building blocks of isoprenoid compounds. Catalyzes the conversion of 4-diphosphocytidyl-2-C-methyl-D-erythritol 2-phosphate (CDP-ME2P) to 2-C-methyl-D-erythritol 2,4-cyclodiphosphate (ME-CPP) with a corresponding release of cytidine 5-monophosphate (CMP). The chain is 2-C-methyl-D-erythritol 2,4-cyclodiphosphate synthase from Rhodopirellula baltica (strain DSM 10527 / NCIMB 13988 / SH1).